A 273-amino-acid polypeptide reads, in one-letter code: Large ribosomal subunit protein uL2 (273 aa).

The interval Trp-213–Asn-261 is disordered.

This sequence belongs to the universal ribosomal protein uL2 family. As to quaternary structure, part of the 50S ribosomal subunit. Forms a bridge to the 30S subunit in the 70S ribosome.

In terms of biological role, one of the primary rRNA binding proteins. Required for association of the 30S and 50S subunits to form the 70S ribosome, for tRNA binding and peptide bond formation. It has been suggested to have peptidyltransferase activity; this is somewhat controversial. Makes several contacts with the 16S rRNA in the 70S ribosome. In Syntrophotalea carbinolica (strain DSM 2380 / NBRC 103641 / GraBd1) (Pelobacter carbinolicus), this protein is Large ribosomal subunit protein uL2.